The primary structure comprises 336 residues: GTP 3',8-cyclase (336 aa).

Residues 16-241 (AYRRTYYYLR…QSKGITDGPA (226 aa)) enclose the Radical SAM core domain. GTP is bound at residue R25. Residues C32 and C36 each contribute to the [4Fe-4S] cluster site. Y38 lines the S-adenosyl-L-methionine pocket. C39 provides a ligand contact to [4Fe-4S] cluster. R75 contacts GTP. Residue G79 participates in S-adenosyl-L-methionine binding. T106 serves as a coordination point for GTP. S130 provides a ligand contact to S-adenosyl-L-methionine. K167 serves as a coordination point for GTP. Residue M201 participates in S-adenosyl-L-methionine binding. Residues C264 and C267 each contribute to the [4Fe-4S] cluster site. 269-271 (RLR) is a GTP binding site. [4Fe-4S] cluster is bound at residue C281.

Belongs to the radical SAM superfamily. MoaA family. In terms of assembly, monomer and homodimer. Requires [4Fe-4S] cluster as cofactor.

The enzyme catalyses GTP + AH2 + S-adenosyl-L-methionine = (8S)-3',8-cyclo-7,8-dihydroguanosine 5'-triphosphate + 5'-deoxyadenosine + L-methionine + A + H(+). It participates in cofactor biosynthesis; molybdopterin biosynthesis. In terms of biological role, catalyzes the cyclization of GTP to (8S)-3',8-cyclo-7,8-dihydroguanosine 5'-triphosphate. The polypeptide is GTP 3',8-cyclase (Actinobacillus succinogenes (strain ATCC 55618 / DSM 22257 / CCUG 43843 / 130Z)).